The sequence spans 460 residues: Malonyl-coenzyme A:anthocyanin 3-O-glucoside-6''-O-malonyltransferase (460 aa).

Active-site proton acceptor residues include H173 and D400.

Belongs to the plant acyltransferase family.

It carries out the reaction an anthocyanidin 3-O-beta-D-glucoside + malonyl-CoA = an anthocyanidin 3-O-(6-O-malonyl-beta-D-glucoside) + CoA. With respect to regulation, completely inhibited by 5 mM N-ethylmaleimide or 0.1 mM Cu(2+). Partially inhibited by 0.1 mM Fe(2+) or 0.1 mM Hg(2+). Its function is as follows. Catalyzes the transfer of the malonyl group from malonyl-CoA to pelargonidin 3-O-glucoside to produce pelargonidin 3-O-6''-O-malonylglucoside. Can also transfer the malonyl group from malonyl-CoA to cyanidin 3-O-glucoside, delphinidin 3-O-glucoside and quercetin 3-O-glucoside. The protein is Malonyl-coenzyme A:anthocyanin 3-O-glucoside-6''-O-malonyltransferase of Dahlia pinnata (Pinnate dahlia).